We begin with the raw amino-acid sequence, 201 residues long: Small ribosomal subunit protein uS4c (201 aa).

Positions 20 to 44 (GLTSKRPRAGSDLRNQSRSGKKSQY) are disordered. The region spanning 89–152 (MRLDNILFRL…NSRTLVQNLL (64 aa)) is the S4 RNA-binding domain.

Belongs to the universal ribosomal protein uS4 family. As to quaternary structure, part of the 30S ribosomal subunit. Contacts protein S5. The interaction surface between S4 and S5 is involved in control of translational fidelity.

The protein resides in the plastid. It localises to the chloroplast. Functionally, one of the primary rRNA binding proteins, it binds directly to 16S rRNA where it nucleates assembly of the body of the 30S subunit. Its function is as follows. With S5 and S12 plays an important role in translational accuracy. The chain is Small ribosomal subunit protein uS4c (rps4) from Arabis hirsuta (Hairy rock-cress).